We begin with the raw amino-acid sequence, 447 residues long: Cobyrinate a,c-diamide synthase (447 aa).

A GATase cobBQ-type domain is found at 252 to 439 (KIAIAFDESF…AHQHAVGNPY (188 aa)). Residue C331 is the Nucleophile of the active site.

This sequence belongs to the CobB/CbiA family. The cofactor is Mg(2+).

The enzyme catalyses cob(II)yrinate + 2 L-glutamine + 2 ATP + 2 H2O = cob(II)yrinate a,c diamide + 2 L-glutamate + 2 ADP + 2 phosphate + 2 H(+). It carries out the reaction Ni-sirohydrochlorin + 2 L-glutamine + 2 ATP + 2 H2O = Ni-sirohydrochlorin a,c-diamide + 2 L-glutamate + 2 ADP + 2 phosphate + 2 H(+). It participates in cofactor biosynthesis; adenosylcobalamin biosynthesis; cob(II)yrinate a,c-diamide from sirohydrochlorin (anaerobic route): step 10/10. In terms of biological role, catalyzes the ATP-dependent amidation of the two carboxylate groups at positions a and c of cobyrinate, using either L-glutamine or ammonia as the nitrogen source. Involved in the biosynthesis of the unique nickel-containing tetrapyrrole coenzyme F430, the prosthetic group of methyl-coenzyme M reductase (MCR), which plays a key role in methanogenesis and anaerobic methane oxidation. Catalyzes the ATP-dependent amidation of the two carboxylate groups at positions a and c of Ni-sirohydrochlorin, using L-glutamine or ammonia as the nitrogen source. This chain is Cobyrinate a,c-diamide synthase, found in Methanococcus vannielii (strain ATCC 35089 / DSM 1224 / JCM 13029 / OCM 148 / SB).